A 239-amino-acid chain; its full sequence is Bradykinin-potentiating and C-type natriuretic peptides (239 aa).

An N-terminal signal peptide occupies residues Met1–Gly23. 2 propeptides span residues Lys24–Gly33 and Leu43–Ser49. Pyrrolidone carboxylic acid is present on Gln50. Positions Val62–Val64 are excised as a propeptide. Pyrrolidone carboxylic acid is present on Gln65. A propeptide spanning residues Leu76–Ser82 is cleaved from the precursor. Gln83 carries the post-translational modification Pyrrolidone carboxylic acid. Positions Leu95–Val97 are excised as a propeptide. Residue Gln98 is modified to Pyrrolidone carboxylic acid. Propeptides lie at residues Leu109–Asp136 and Gly148–Lys217. The segment at Glu132–Gly205 is disordered. The span at Ser161–Ser171 shows a compositional bias: low complexity. Residues Pro173–Gln183 are compositionally biased toward basic and acidic residues. A disulfide bond links Cys223 and Cys239.

It in the N-terminal section; belongs to the bradykinin-potentiating peptide family. In the central section; belongs to the bradykinin inhibitor peptide family. This sequence in the C-terminal section; belongs to the natriuretic peptide family. In terms of tissue distribution, expressed by the venom gland.

The protein localises to the secreted. In terms of biological role, bradykinin-potentiating peptides both inhibit the activity of the angiotensin-converting enzyme (ACE) and enhances the action of bradykinin by inhibiting the peptidases that inactivate it. They act as indirect hypotensive agent. Functionally, inhibits angiotensin-converting enzyme (ACE) activity (IC(50)=4.25 uM), preventing the release of angiotensin and thus indirectly contributing to hypotension. In vivo, induce hypotensive response in both normotensive and hypertensive rats. Its function is as follows. antagonizes the vasodilatory actions of bradykinin at the B2 bradykinin receptor (BDKRB2). Has a vasorelaxant activity in rat aortic strips and a diuretic potency in anesthetized rats. May act by activating natriuretic receptors (NPR1 and/or NPR2). The protein is Bradykinin-potentiating and C-type natriuretic peptides of Lachesis muta muta (Bushmaster).